Reading from the N-terminus, the 267-residue chain is Myeloid leukemia factor 1 (267 aa).

Ser-6, Ser-8, Ser-32, and Ser-34 each carry phosphoserine. Positions 39–67 (RDLLSISDGRGRTHNRRERDDGEDSLTHA) are disordered. An interaction with COPS3 region spans residues 50-125 (RTHNRRERDD…VGDEPPKVFQ (76 aa)).

It belongs to the MLF family. As to quaternary structure, interacts with CENPU. Also interacts with NRBP1/MADM, YWHAZ/14-3-3-zeta and HNRPUL2/MANP. NRBP1 recruits a serine kinase which phosphorylates both itself and MLF1. Phosphorylated MLF1 then binds to YWHAZ and is retained in the cytoplasm. Retained in the nucleus by binding to HNRPUL2. Binds to COPS3/CSN3 which is required for suppression of COP1 and activation of p53. Phosphorylation is required for binding to YWHAZ. As to expression, highly expressed in skeletal muscle, heart, testis. Also found in lung, but not in spleen, thymus, bone marrow, liver and kidney.

It localises to the cytoplasm. It is found in the nucleus. The protein resides in the cell projection. Its subcellular location is the cilium. The protein localises to the cytoskeleton. It localises to the cilium basal body. Involved in lineage commitment of primary hemopoietic progenitors by restricting erythroid formation and enhancing myeloid formation. Interferes with erythropoietin-induced erythroid terminal differentiation by preventing cells from exiting the cell cycle through suppression of CDKN1B/p27Kip1 levels. Suppresses COP1 activity via CSN3 which activates p53 and induces cell cycle arrest. Binds DNA and affects the expression of a number of genes so may function as a transcription factor in the nucleus. This is Myeloid leukemia factor 1 (Mlf1) from Mus musculus (Mouse).